The primary structure comprises 157 residues: Crossover junction endodeoxyribonuclease RuvC (157 aa).

Active-site residues include aspartate 9, glutamate 70, and aspartate 142. 3 residues coordinate Mg(2+): aspartate 9, glutamate 70, and aspartate 142.

Belongs to the RuvC family. As to quaternary structure, homodimer which binds Holliday junction (HJ) DNA. The HJ becomes 2-fold symmetrical on binding to RuvC with unstacked arms; it has a different conformation from HJ DNA in complex with RuvA. In the full resolvosome a probable DNA-RuvA(4)-RuvB(12)-RuvC(2) complex forms which resolves the HJ. Mg(2+) is required as a cofactor.

It localises to the cytoplasm. The catalysed reaction is Endonucleolytic cleavage at a junction such as a reciprocal single-stranded crossover between two homologous DNA duplexes (Holliday junction).. In terms of biological role, the RuvA-RuvB-RuvC complex processes Holliday junction (HJ) DNA during genetic recombination and DNA repair. Endonuclease that resolves HJ intermediates. Cleaves cruciform DNA by making single-stranded nicks across the HJ at symmetrical positions within the homologous arms, yielding a 5'-phosphate and a 3'-hydroxyl group; requires a central core of homology in the junction. The consensus cleavage sequence is 5'-(A/T)TT(C/G)-3'. Cleavage occurs on the 3'-side of the TT dinucleotide at the point of strand exchange. HJ branch migration catalyzed by RuvA-RuvB allows RuvC to scan DNA until it finds its consensus sequence, where it cleaves and resolves the cruciform DNA. This Cyanothece sp. (strain PCC 7425 / ATCC 29141) protein is Crossover junction endodeoxyribonuclease RuvC.